Here is a 60-residue protein sequence, read N- to C-terminus: Metallothionein (60 aa).

Positions 1 to 28 are beta; sequence MDPCDCSKTGKCNCGGSCTCTNCSCTSC. Positions 4, 6, 12, 14, 18, 20, 23, 25, 28, 32, 33, 35, 36, 40, 43, 47, 49, 54, 58, and 59 each coordinate a divalent metal cation. Residues 29-60 are alpha; it reads KKSCCACCPSGCTKCASGCVCKGKTCDTTCCQ.

It belongs to the metallothionein superfamily. Type 1 family.

Metallothioneins have a high content of cysteine residues that bind various heavy metals. This chain is Metallothionein (mt), found in Oryzias latipes (Japanese rice fish).